The chain runs to 336 residues: ATP-dependent 6-phosphofructokinase (336 aa).

Position 11 (glycine 11) interacts with ATP. 21-25 (RAVVR) is an ADP binding site. ATP contacts are provided by residues 72–73 (RY) and 102–105 (GDGS). A Mg(2+)-binding site is contributed by aspartate 103. Position 125–127 (125–127 (TID)) interacts with substrate. The active-site Proton acceptor is aspartate 127. Arginine 154 lines the ADP pocket. Substrate contacts are provided by residues arginine 162 and 169-171 (MGR). ADP contacts are provided by residues 185-187 (GAD), lysine 211, and 213-215 (KKH). Substrate is bound by residues glutamate 222, arginine 244, and 250 to 253 (HIQR).

Belongs to the phosphofructokinase type A (PFKA) family. ATP-dependent PFK group I subfamily. Prokaryotic clade 'B1' sub-subfamily. As to quaternary structure, homotetramer. Mg(2+) serves as cofactor.

Its subcellular location is the cytoplasm. The enzyme catalyses beta-D-fructose 6-phosphate + ATP = beta-D-fructose 1,6-bisphosphate + ADP + H(+). It participates in carbohydrate degradation; glycolysis; D-glyceraldehyde 3-phosphate and glycerone phosphate from D-glucose: step 3/4. Its activity is regulated as follows. Allosterically activated by ADP and other diphosphonucleosides, and allosterically inhibited by phosphoenolpyruvate. Functionally, catalyzes the phosphorylation of D-fructose 6-phosphate to fructose 1,6-bisphosphate by ATP, the first committing step of glycolysis. This Streptococcus suis (strain 05ZYH33) protein is ATP-dependent 6-phosphofructokinase.